Here is a 397-residue protein sequence, read N- to C-terminus: MDDSKRILITKILKNEVTEALGCTEVGLIGYAVSLCNISDPFSIEKIELTLNNGSFKNVYAVGVPNTGKYGLLPAVVGGFLGNSKNKLLIFNDITYSQELEDFTKEKLEIKVINGPLYCSVKIKDNSGKIHESLIKDNHLNVVIPEIKKEKINMEINSSEKEKYKNLELLDFLNYLDEIPEEIIKLVEKTIYTNKNLIKGDFLNYGTDILSNMVNKTTSACNIRMTGENMTAMSVAKSGNMGIMATLPIISYDFSTENNSEKLIKSVLLSMLVTIYSTYNSSYLSSMCGCVSKGGMGAVIGLSHYKNGKNLKKFDSSARTFTANLPGIICDGGKVGCALKLASGCFAAYSSLFVDISYENGIVGKNFKECVENISKISKAMGDLDCDIVEIMSKKEM.

Cysteine 23 serves as the catalytic Proton acceptor. [4Fe-4S] cluster contacts are provided by cysteine 288, cysteine 330, and cysteine 337.

Belongs to the L-cysteine desulfidase family. As to quaternary structure, homotrimer. Requires [4Fe-4S] cluster as cofactor.

The catalysed reaction is L-cysteine + H2O = hydrogen sulfide + pyruvate + NH4(+) + H(+). Its function is as follows. Catalyzes the cleavage of L-cysteine to form 2-aminoprop-2-enoate and sulfide. The former then spontaneously hydrolyzes to pyruvate and NH(3). May be responsible for the production of sulfide required for the biosynthesis of iron-sulfur centers in this archaea. The chain is L-cysteine desulfidase from Methanococcus maripaludis (strain C5 / ATCC BAA-1333).